We begin with the raw amino-acid sequence, 579 residues long: MTARYGFGSISFPNKCGIFLSTTKNFIAPNFPIHYWTAPAFELRGRMNPDLEKNTLTLKNAAAVAALDNLRGETITLPTEIDRRLKPLEEQLTRMAKVLDSLETAAAEAEEADAQSEECTRTEIIRNESIHPEVQIAKNDAPLQYDTNFQVDFITLVYLGRARGNNSPGIVFGPWYRTLQERLVLDRPVAARGVDCKDGRISRTFMNTTVTCLQSAGRMYVGDRAYSAFECAVLCLYLMYRTSNSVHEPQVSSFGNLIEHLPEYTETFVNYMTTHENKNSYQFCYDRLPRDQFHARGGRYDQGALTSHSVMDALIRLQVLPPAPGQFNPGVNDIIDRNHTAYVDKIQQAAAAYLERAQNVFLMEDQTLLRLTIDTITALLLLRRLLWNGNVYGDKLKNNFQLGLIVSEATGTPTNNVILRGATGFDGKFKSGNNNFQFLCERYIAPLYTLNRTTELTEMFPGLVALCLDAHTQLSRGSLGRTVIDISSGQYQDRLISLIALELEHRRQNVTSLPIAAVVSIHDSVMLQYERGLGMLMHQPRVRAALEESRRLAQFNVNSDYDLLYFVCLGVIPQFASTP.

Residues 1–50 (MTARYGFGSISFPNKCGIFLSTTKNFIAPNFPIHYWTAPAFELRGRMNPD) form an interaction with major capsid protein/MCP region.

It belongs to the herpesviridae CVC2 protein family. Heterodimerizes with CVC1. Interacts with major capsid protein/MCP and triplex capsid protein 1/TRX1 at the pentamer vertices. Interacts with the large tegument protein/LTP.

It localises to the virion. The protein localises to the host nucleus. Its function is as follows. Capsid vertex-specific component that plays a role during viral DNA encapsidation, assuring correct genome cleavage and presumably stabilizing capsids that contain full-length viral genomes. Participates in the interaction between the capsid and the tegument through interaction with the large tegument protein/LTP. The sequence is that of Capsid vertex component 2 from Homo sapiens (Human).